Reading from the N-terminus, the 379-residue chain is Chaperone protein DnaJ (379 aa).

A J domain is found at 5–69 (EFYDRLGVSK…QKRAAYDQYG (65 aa)). The CR-type zinc-finger motif lies at 135–217 (GAEKEVSYNR…CHGTGHEKKT (83 aa)). The Zn(2+) site is built by Cys148, Cys151, Cys165, Cys168, Cys191, Cys194, Cys205, and Cys208. CXXCXGXG motif repeat units lie at residues 148–155 (CHTCSGSG), 165–172 (CQKCHGSG), 191–198 (CDVCQGSG), and 205–212 (CPTCHGTG).

The protein belongs to the DnaJ family. Homodimer. The cofactor is Zn(2+).

It is found in the cytoplasm. Functionally, participates actively in the response to hyperosmotic and heat shock by preventing the aggregation of stress-denatured proteins and by disaggregating proteins, also in an autonomous, DnaK-independent fashion. Unfolded proteins bind initially to DnaJ; upon interaction with the DnaJ-bound protein, DnaK hydrolyzes its bound ATP, resulting in the formation of a stable complex. GrpE releases ADP from DnaK; ATP binding to DnaK triggers the release of the substrate protein, thus completing the reaction cycle. Several rounds of ATP-dependent interactions between DnaJ, DnaK and GrpE are required for fully efficient folding. Also involved, together with DnaK and GrpE, in the DNA replication of plasmids through activation of initiation proteins. The chain is Chaperone protein DnaJ from Streptococcus agalactiae serotype V (strain ATCC BAA-611 / 2603 V/R).